The chain runs to 485 residues: Ribulose bisphosphate carboxylase large chain (485 aa).

A propeptide spanning residues 1 to 2 is cleaved from the precursor; the sequence is MS. Position 3 is an N-acetylproline (P3). K14 is subject to N6,N6,N6-trimethyllysine. Residues N123 and T173 each contribute to the substrate site. Catalysis depends on K175, which acts as the Proton acceptor. K177 contributes to the substrate binding site. K201, D203, and E204 together coordinate Mg(2+). K201 carries the post-translational modification N6-carboxylysine. Catalysis depends on H294, which acts as the Proton acceptor. The substrate site is built by R295, H327, and S379.

The protein belongs to the RuBisCO large chain family. Type I subfamily. In terms of assembly, heterohexadecamer of 8 large chains and 8 small chains; disulfide-linked. The disulfide link is formed within the large subunit homodimers. Mg(2+) serves as cofactor. The disulfide bond which can form in the large chain dimeric partners within the hexadecamer appears to be associated with oxidative stress and protein turnover.

The protein localises to the plastid. It localises to the chloroplast. The enzyme catalyses 2 (2R)-3-phosphoglycerate + 2 H(+) = D-ribulose 1,5-bisphosphate + CO2 + H2O. It catalyses the reaction D-ribulose 1,5-bisphosphate + O2 = 2-phosphoglycolate + (2R)-3-phosphoglycerate + 2 H(+). RuBisCO catalyzes two reactions: the carboxylation of D-ribulose 1,5-bisphosphate, the primary event in carbon dioxide fixation, as well as the oxidative fragmentation of the pentose substrate in the photorespiration process. Both reactions occur simultaneously and in competition at the same active site. The protein is Ribulose bisphosphate carboxylase large chain of Flaveria bidentis (Coastal plain yellowtops).